The sequence spans 285 residues: Malonyl-[acyl-carrier protein] O-methyltransferase (285 aa).

It belongs to the methyltransferase superfamily.

It carries out the reaction malonyl-[ACP] + S-adenosyl-L-methionine = malonyl-[ACP] methyl ester + S-adenosyl-L-homocysteine. It participates in cofactor biosynthesis; biotin biosynthesis. Its function is as follows. Converts the free carboxyl group of a malonyl-thioester to its methyl ester by transfer of a methyl group from S-adenosyl-L-methionine (SAM). It allows to synthesize pimeloyl-ACP via the fatty acid synthetic pathway. This Bacillus cytotoxicus (strain DSM 22905 / CIP 110041 / 391-98 / NVH 391-98) protein is Malonyl-[acyl-carrier protein] O-methyltransferase.